The sequence spans 496 residues: MNFELKTLSLAASAAHKCDLLVVLVPEGFLPGSDVLSTMVAHALKQGDLEVKPGKLLQCYAPAGVAARRVVLLGCGAADAHAVRQAMQALSPSFKLPSVKRVALVFGTSAQRGAIGAAVRAVADGSYVYTATKTKAEPRALLRVTLGVPNAGAAQPEFATATAVAAGVEFAREWANRPANHATPTLVANAAKTLAKYPGVQCQVLGPAEVAKLGMGAFLAVAQGSDQPLRLVELRYNGAARTQAPVVLVGKGITFDTGGISLKPAAEMDEMKFDMGGAASVLGVFRALAELRPAINVVGLIPACENMPDGKAVKPGDVVTSMSGQTIEILNTDAEGRLVLCDALTYAARFKPAAVVDIATLTGACVVALGGLRSGLFASDDLLAEQLLSAGDAALDPCWRMPLDDEYAEGLKSNFADMANVAGRAGGSITAAKFLQRFVGDTPWAHLDIAGTAWKGGAAKGATGRPVALLVHYLLDQATVSTVKPKQKTRSRKSVA.

Mn(2+) is bound by residues Lys-251 and Asp-256. The active site involves Lys-263. Positions 274, 333, and 335 each coordinate Mn(2+). Residue Arg-337 is part of the active site.

Belongs to the peptidase M17 family. The cofactor is Mn(2+).

The protein resides in the cytoplasm. It carries out the reaction Release of an N-terminal amino acid, Xaa-|-Yaa-, in which Xaa is preferably Leu, but may be other amino acids including Pro although not Arg or Lys, and Yaa may be Pro. Amino acid amides and methyl esters are also readily hydrolyzed, but rates on arylamides are exceedingly low.. The enzyme catalyses Release of an N-terminal amino acid, preferentially leucine, but not glutamic or aspartic acids.. In terms of biological role, presumably involved in the processing and regular turnover of intracellular proteins. Catalyzes the removal of unsubstituted N-terminal amino acids from various peptides. This Acidovorax sp. (strain JS42) protein is Probable cytosol aminopeptidase.